The chain runs to 553 residues: Chaperonin GroEL 1 (553 aa).

ATP-binding positions include 29–32 (TIGP), 86–90 (DGTTT), glycine 413, 476–478 (NAL), and aspartate 492. The tract at residues 521–542 (KPEPPAAPAPGGDPMGGMGGMG) is disordered. Residues 533-542 (DPMGGMGGMG) are compositionally biased toward gly residues.

The protein belongs to the chaperonin (HSP60) family. In terms of assembly, forms a cylinder of 14 subunits composed of two heptameric rings stacked back-to-back. Interacts with the co-chaperonin GroES.

The protein resides in the cytoplasm. It carries out the reaction ATP + H2O + a folded polypeptide = ADP + phosphate + an unfolded polypeptide.. Together with its co-chaperonin GroES, plays an essential role in assisting protein folding. The GroEL-GroES system forms a nano-cage that allows encapsulation of the non-native substrate proteins and provides a physical environment optimized to promote and accelerate protein folding. The sequence is that of Chaperonin GroEL 1 from Synechococcus sp. (strain WH7803).